Reading from the N-terminus, the 2197-residue chain is Non-reducing polyketide synthase Preu6 (2197 aa).

Residues 14–253 (FFCPQSRAPP…HNPENAELAK (240 aa)) form an N-terminal acylcarrier protein transacylase domain (SAT) region. The Ketosynthase family 3 (KS3) domain occupies 375–797 (DDAIAITGAS…GSNAAVICVE (423 aa)). Active-site for beta-ketoacyl synthase activity residues include C546, H681, and H720. A malonyl-CoA:ACP transacylase (MAT) domain region spans residues 901 to 1198 (LVFSGQNTNA…SKPDSQVFQS (298 aa)). S988 functions as the For acyl/malonyl transferase activity in the catalytic mechanism. A disordered region spans residues 1258 to 1282 (ATEASQASTTSDTIQSTPTQTVQSP). The segment covering 1260–1281 (EASQASTTSDTIQSTPTQTVQS) has biased composition (polar residues). The N-terminal hotdog fold stretch occupies residues 1276-1403 (TQTVQSPPKL…GRVILTESSV (128 aa)). In terms of domain architecture, PKS/mFAS DH spans 1276–1576 (TQTVQSPPKL…FNKMEISKLA (301 aa)). The segment at 1284–1575 (KLISRLASLQ…RFNKMEISKL (292 aa)) is product template (PT) domain. H1310 (proton acceptor; for dehydratase activity) is an active-site residue. The tract at residues 1424–1576 (AEKLMSSRAY…FNKMEISKLA (153 aa)) is C-terminal hotdog fold. D1487 serves as the catalytic Proton donor; for dehydratase activity. A compositionally biased stretch (polar residues) spans 1581-1591 (SVNASSPTGGR). The interval 1581–1614 (SVNASSPTGGRTQPPAAPKTQAQPMASRPSPTPL) is disordered. Carrier domains follow at residues 1639–1719 (NDIG…SQKM) and 1748–1824 (NSIT…ATPP). S1673 and S1782 each carry O-(pantetheine 4'-phosphoryl)serine. Residues 1817–1841 (LGASATPPSTTGSSTPGDISTAATT) are disordered. Low complexity predominate over residues 1818-1833 (GASATPPSTTGSSTPG). The tract at residues 1870 to 2197 (DSYQVKTVEY…PGLDFLIQNA (328 aa)) is thioesterase (TE) domain. Catalysis depends on for thioesterase activity residues S1990 and D2137.

It depends on pantetheine 4'-phosphate as a cofactor.

It catalyses the reaction 6 malonyl-CoA + 2 acetyl-CoA + 5 H(+) = o-orsellinate depside + 6 CO2 + 8 CoA + H2O. Its function is as follows. Non-reducing polyketide synthase; part of a gene cluster that mediates the biosynthesis of a yet unidentified natural product. The first step in the pathway is performed by Preu6 that condenses 2 acetyl-CoA starter units with 6 malonyl-CoA units to produce lecanoric acid (LA), also known as orsellinate depside, an intermediate that has significant antifungal activity against the plant pathogen Botryosphaeria berengeriana. The biosynthesis probably occurs via the formation of 2 orsellinate intermediates fused together by the C-terminal thioesterase (TE) domain that finally releases lecanoric acid. In Preussia isomera (Coprophilous fungus), this protein is Non-reducing polyketide synthase Preu6.